The chain runs to 385 residues: Probable thioesterase PNKD (385 aa).

Residues 31 to 42 (NKASQNRSRALQ) are compositionally biased toward polar residues. A disordered region spans residues 31–57 (NKASQNRSRALQSHSSPECKEEPEPLS). Positions 172, 174, 176, 177, 229, 253, and 291 each coordinate Zn(2+).

It belongs to the metallo-beta-lactamase superfamily. Glyoxalase II family. It depends on Zn(2+) as a cofactor. In terms of processing, undergoes cleavage at the N-terminus.

It is found in the cell membrane. It localises to the mitochondrion. The catalysed reaction is a thioester + H2O = a thiol + a carboxylate + H(+). In terms of biological role, probable thioesterase that may play a role in cellular detoxification processes; it likely acts on a yet-unknown alpha-hydroxythioester substrate. In vitro, it is able to catalyze the hydrolysis of S-D-lactoyl-glutathione to form glutathione and D-lactic acid at very low rate, though this reaction is not physiologically relevant in vivo. The chain is Probable thioesterase PNKD (PNKD) from Bos taurus (Bovine).